The sequence spans 294 residues: ATP phosphoribosyltransferase (294 aa).

The protein belongs to the ATP phosphoribosyltransferase family. Long subfamily. It depends on Mg(2+) as a cofactor.

Its subcellular location is the cytoplasm. The enzyme catalyses 1-(5-phospho-beta-D-ribosyl)-ATP + diphosphate = 5-phospho-alpha-D-ribose 1-diphosphate + ATP. The protein operates within amino-acid biosynthesis; L-histidine biosynthesis; L-histidine from 5-phospho-alpha-D-ribose 1-diphosphate: step 1/9. Its activity is regulated as follows. Feedback inhibited by histidine. Its function is as follows. Catalyzes the condensation of ATP and 5-phosphoribose 1-diphosphate to form N'-(5'-phosphoribosyl)-ATP (PR-ATP). Has a crucial role in the pathway because the rate of histidine biosynthesis seems to be controlled primarily by regulation of HisG enzymatic activity. This is ATP phosphoribosyltransferase from Chlorobium phaeovibrioides (strain DSM 265 / 1930) (Prosthecochloris vibrioformis (strain DSM 265)).